Reading from the N-terminus, the 443-residue chain is Ribosomal protein uS12 methylthiotransferase RimO (443 aa).

Positions 5-115 (PNIGFISLGC…VMQHVHKYVP (111 aa)) constitute an MTTase N-terminal domain. Residues Cys14, Cys50, Cys79, Cys147, Cys151, and Cys154 each coordinate [4Fe-4S] cluster. The 242-residue stretch at 133–374 (LTPKHYAYLK…MQVQQRISVA (242 aa)) folds into the Radical SAM core domain. A TRAM domain is found at 377 to 443 (QQKIGKTLAI…ADEYDLWGTY (67 aa)).

The protein belongs to the methylthiotransferase family. RimO subfamily. The cofactor is [4Fe-4S] cluster.

The protein resides in the cytoplasm. It catalyses the reaction L-aspartate(89)-[ribosomal protein uS12]-hydrogen + (sulfur carrier)-SH + AH2 + 2 S-adenosyl-L-methionine = 3-methylsulfanyl-L-aspartate(89)-[ribosomal protein uS12]-hydrogen + (sulfur carrier)-H + 5'-deoxyadenosine + L-methionine + A + S-adenosyl-L-homocysteine + 2 H(+). Its function is as follows. Catalyzes the methylthiolation of an aspartic acid residue of ribosomal protein uS12. This chain is Ribosomal protein uS12 methylthiotransferase RimO, found in Haemophilus ducreyi (strain 35000HP / ATCC 700724).